A 160-amino-acid polypeptide reads, in one-letter code: Small ribosomal subunit protein bS6 (160 aa).

The disordered stretch occupies residues 100 to 160 (PSSVLARKSD…DDARETAGAE (61 aa)). 2 stretches are compositionally biased toward basic and acidic residues: residues 106–116 (RKSDDRGDRGN) and 136–160 (RSSE…AGAE).

This sequence belongs to the bacterial ribosomal protein bS6 family.

In terms of biological role, binds together with bS18 to 16S ribosomal RNA. This chain is Small ribosomal subunit protein bS6, found in Gluconobacter oxydans (strain 621H) (Gluconobacter suboxydans).